A 315-amino-acid chain; its full sequence is Methionyl-tRNA formyltransferase (315 aa).

Ser-113–Pro-116 contacts (6S)-5,6,7,8-tetrahydrofolate.

Belongs to the Fmt family.

The catalysed reaction is L-methionyl-tRNA(fMet) + (6R)-10-formyltetrahydrofolate = N-formyl-L-methionyl-tRNA(fMet) + (6S)-5,6,7,8-tetrahydrofolate + H(+). Its function is as follows. Attaches a formyl group to the free amino group of methionyl-tRNA(fMet). The formyl group appears to play a dual role in the initiator identity of N-formylmethionyl-tRNA by promoting its recognition by IF2 and preventing the misappropriation of this tRNA by the elongation apparatus. This chain is Methionyl-tRNA formyltransferase, found in Erwinia tasmaniensis (strain DSM 17950 / CFBP 7177 / CIP 109463 / NCPPB 4357 / Et1/99).